Here is a 239-residue protein sequence, read N- to C-terminus: Transcriptional regulatory protein DcuR (239 aa).

The Response regulatory domain occupies 3 to 121 (NVLIIDDDAM…RFEEALTGWR (119 aa)). A 4-aspartylphosphate modification is found at Asp56. Positions 181–200 (TDELANEVNISRVSCRKYLI) form a DNA-binding region, H-T-H motif.

Post-translationally, phosphorylated and activated by DcuS.

The protein resides in the cytoplasm. Its function is as follows. Member of the two-component regulatory system DcuR/DcuS. Involved in the C4-dicarboxylate-stimulated regulation of the genes encoding the anaerobic fumarate respiratory system (frdABCD; nuoAN; dcuB; dcuC; sdhCDAB; etc.). Weakly regulates the aerobic C4-dicarboxylate transporter dctA. The protein is Transcriptional regulatory protein DcuR (dcuR) of Shigella flexneri.